Reading from the N-terminus, the 110-residue chain is Large ribosomal subunit protein uL22 (110 aa).

It belongs to the universal ribosomal protein uL22 family. In terms of assembly, part of the 50S ribosomal subunit.

Functionally, this protein binds specifically to 23S rRNA; its binding is stimulated by other ribosomal proteins, e.g. L4, L17, and L20. It is important during the early stages of 50S assembly. It makes multiple contacts with different domains of the 23S rRNA in the assembled 50S subunit and ribosome. Its function is as follows. The globular domain of the protein is located near the polypeptide exit tunnel on the outside of the subunit, while an extended beta-hairpin is found that lines the wall of the exit tunnel in the center of the 70S ribosome. The protein is Large ribosomal subunit protein uL22 of Desulfotalea psychrophila (strain LSv54 / DSM 12343).